Here is a 502-residue protein sequence, read N- to C-terminus: Mannitol dehydrogenase 2 (502 aa).

It belongs to the mannitol dehydrogenase family.

The catalysed reaction is D-mannitol + NAD(+) = D-fructose + NADH + H(+). In terms of biological role, catalyzes the NAD(H)-dependent interconversion of D-fructose and D-mannitol in the mannitol metabolic pathway. In Saccharomyces cerevisiae (strain ATCC 204508 / S288c) (Baker's yeast), this protein is Mannitol dehydrogenase 2.